We begin with the raw amino-acid sequence, 202 residues long: MSRYRGPRVRIIRRLGALPGLTSKTPQLKSSSINQSTSNKKISQYRIRLEEKQKLRFHYGITERQLLNYVRIARKAKGSTGEVLLQLLEMRLDNVIFRLGMAPTIPGARQLVNHRHILVNDYVVDIPSYRCKPQDFITIKNQQKSETIISKNIEFYQKYKIPNHLTYSSLEKKGLINQILDRESIGLKINELLVVEYYSRQA.

The S4 RNA-binding domain occupies 90–153 (MRLDNVIFRL…KSETIISKNI (64 aa)).

This sequence belongs to the universal ribosomal protein uS4 family. In terms of assembly, part of the 30S ribosomal subunit. Contacts protein S5. The interaction surface between S4 and S5 is involved in control of translational fidelity.

It localises to the plastid. The protein resides in the chloroplast. Functionally, one of the primary rRNA binding proteins, it binds directly to 16S rRNA where it nucleates assembly of the body of the 30S subunit. With S5 and S12 plays an important role in translational accuracy. This Arbusculohypopterygium arbuscula (Moss) protein is Small ribosomal subunit protein uS4c (rps4).